A 485-amino-acid polypeptide reads, in one-letter code: Benzaldehyde dehydrogenase YfmT (485 aa).

Residue 231-236 coordinates NAD(+); it reads GSTKVG. Residues Glu253 and Cys287 contribute to the active site.

It belongs to the aldehyde dehydrogenase family.

The enzyme catalyses benzaldehyde + NAD(+) + H2O = benzoate + NADH + 2 H(+). It catalyses the reaction vanillin + NAD(+) + H2O = vanillate + NADH + 2 H(+). In terms of biological role, a benzaldehyde dehydrogenase able to act on substrates with 3- and 4-hydroxy and methoxy substitutions; converts vanillin (4-hydroxy-3-methoxybenzaldehyde) to vanillic acid in vitro. The physiological substrate is unknown. The polypeptide is Benzaldehyde dehydrogenase YfmT (yfmT) (Bacillus subtilis (strain 168)).